The sequence spans 724 residues: Pre-mRNA-splicing factor CLF1 (724 aa).

16 HAT repeats span residues 55–87 (EFQA…WEAS), 89–121 (NEYE…MELK), 123–155 (RNIN…LEEL), 157–188 (LNVS…LEER), 190–221 (NELD…FEED), 223–262 (GQPD…METR), 264–298 (KEFE…FEKQ), 308–340 (TVLG…LEED), 352–386 (VEPM…LWLQ), 396–432 (KDYD…FEIR), 434–465 (LDVS…LEMR), 467–499 (REFD…VESA), 501–534 (EDFE…FEAG), 536–567 (GERE…MEIA), 585–626 (GDAD…EHGD), and 635–667 (DMLP…DDEK). The segment at 681-724 (QAWAQQRAGQGEEGGLSYDLPSDSESENEDEDGDNREEEGMDQD) is disordered. The segment covering 702-724 (SDSESENEDEDGDNREEEGMDQD) has biased composition (acidic residues).

It belongs to the crooked-neck family. As to quaternary structure, associated with the spliceosome.

The protein resides in the nucleus. Its function is as follows. Involved in pre-mRNA splicing and cell cycle progression. Required for the spliceosome assembly and initiation of the DNA replication. The protein is Pre-mRNA-splicing factor CLF1 (CLF1) of Cryptococcus neoformans var. grubii serotype A (strain H99 / ATCC 208821 / CBS 10515 / FGSC 9487) (Filobasidiella neoformans var. grubii).